A 347-amino-acid chain; its full sequence is D-alanine--D-alanine ligase (347 aa).

The ATP-grasp domain occupies 134 to 332 (KLYAKDLGIK…LAQSLPKTPK (199 aa)). 161 to 216 (LINFNFPFIIKPNSAGSSLGVSVVKEEKELNYALDSAFEYSKEVLIEPFIQGVKEY) contacts ATP. The Mg(2+) site is built by D288, E300, and N302.

This sequence belongs to the D-alanine--D-alanine ligase family. Mg(2+) serves as cofactor. The cofactor is Mn(2+).

The protein localises to the cytoplasm. It carries out the reaction 2 D-alanine + ATP = D-alanyl-D-alanine + ADP + phosphate + H(+). The protein operates within cell wall biogenesis; peptidoglycan biosynthesis. Functionally, cell wall formation. The sequence is that of D-alanine--D-alanine ligase from Helicobacter pylori (strain HPAG1).